A 300-amino-acid polypeptide reads, in one-letter code: Geranylgeranyl pyrophosphate synthase (300 aa).

N-acetylmethionine is present on Met-1. Isopentenyl diphosphate contacts are provided by Lys-25, Arg-28, and His-57. 2 residues coordinate Mg(2+): Asp-64 and Asp-68. Arg-73 contacts dimethylallyl diphosphate. Residue Arg-74 participates in isopentenyl diphosphate binding. Dimethylallyl diphosphate contacts are provided by Lys-151, Thr-152, Gln-185, Lys-202, and Lys-212.

Belongs to the FPP/GGPP synthase family. As to quaternary structure, homohexamer; trimer of homodimers. It depends on Mg(2+) as a cofactor.

Its subcellular location is the cytoplasm. The protein localises to the perinuclear region. The protein resides in the myofibril. It is found in the sarcomere. It localises to the z line. The catalysed reaction is isopentenyl diphosphate + dimethylallyl diphosphate = (2E)-geranyl diphosphate + diphosphate. It carries out the reaction isopentenyl diphosphate + (2E)-geranyl diphosphate = (2E,6E)-farnesyl diphosphate + diphosphate. It catalyses the reaction isopentenyl diphosphate + (2E,6E)-farnesyl diphosphate = (2E,6E,10E)-geranylgeranyl diphosphate + diphosphate. It functions in the pathway isoprenoid biosynthesis; farnesyl diphosphate biosynthesis; farnesyl diphosphate from geranyl diphosphate and isopentenyl diphosphate: step 1/1. The protein operates within isoprenoid biosynthesis; geranyl diphosphate biosynthesis; geranyl diphosphate from dimethylallyl diphosphate and isopentenyl diphosphate: step 1/1. It participates in isoprenoid biosynthesis; geranylgeranyl diphosphate biosynthesis; geranylgeranyl diphosphate from farnesyl diphosphate and isopentenyl diphosphate: step 1/1. Functionally, catalyzes the trans-addition of the three molecules of isopentenyl diphosphate (IPP) onto dimethylallyl pyrophosphate (DMAPP) to form geranylgeranyl pyrophosphate, an important precursor of carotenoids and geranylated proteins. This chain is Geranylgeranyl pyrophosphate synthase, found in Mus musculus (Mouse).